Here is a 485-residue protein sequence, read N- to C-terminus: Probable serine/threonine-protein kinase nek1 (485 aa).

The Protein kinase domain occupies 12-283 (YLIKSQIGSG…TQQILEQVFI (272 aa)). ATP-binding positions include 18–26 (IGSGSYGNT) and lysine 41. The active-site Proton acceptor is aspartate 136. Over residues 354–365 (KNQQQQSPQKLE) the composition is skewed to polar residues. The segment at 354-419 (KNQQQQSPQK…NNDKNNNINN (66 aa)) is disordered. Positions 366-419 (NNNNNNNDNNNNNNNNNNNNNNNNNNNNNNNNNNNNNNNNNNNNNNDKNNNINN) are enriched in low complexity.

It belongs to the protein kinase superfamily. NEK Ser/Thr protein kinase family. NIMA subfamily.

The enzyme catalyses L-seryl-[protein] + ATP = O-phospho-L-seryl-[protein] + ADP + H(+). It catalyses the reaction L-threonyl-[protein] + ATP = O-phospho-L-threonyl-[protein] + ADP + H(+). The polypeptide is Probable serine/threonine-protein kinase nek1 (nek1) (Dictyostelium discoideum (Social amoeba)).